A 256-amino-acid chain; its full sequence is tRNA-cytidine(32) 2-sulfurtransferase (256 aa).

The short motif at 35 to 40 (SGGKDS) is the PP-loop motif element. Residues C110, C113, and C201 each coordinate [4Fe-4S] cluster.

It belongs to the TtcA family. Homodimer. It depends on Mg(2+) as a cofactor. [4Fe-4S] cluster is required as a cofactor.

Its subcellular location is the cytoplasm. The enzyme catalyses cytidine(32) in tRNA + S-sulfanyl-L-cysteinyl-[cysteine desulfurase] + AH2 + ATP = 2-thiocytidine(32) in tRNA + L-cysteinyl-[cysteine desulfurase] + A + AMP + diphosphate + H(+). It functions in the pathway tRNA modification. Functionally, catalyzes the ATP-dependent 2-thiolation of cytidine in position 32 of tRNA, to form 2-thiocytidine (s(2)C32). The sulfur atoms are provided by the cysteine/cysteine desulfurase (IscS) system. The chain is tRNA-cytidine(32) 2-sulfurtransferase from Coxiella burnetii (strain RSA 331 / Henzerling II).